Here is a 36-residue protein sequence, read N- to C-terminus: Photosystem I reaction center subunit VIII (36 aa).

The chain crosses the membrane as a helical span at residues 10–29; sequence FVPLVGLVFPAIAMASLFLY.

This sequence belongs to the PsaI family.

It localises to the plastid. The protein localises to the chloroplast thylakoid membrane. Its function is as follows. May help in the organization of the PsaL subunit. In Oryza nivara (Indian wild rice), this protein is Photosystem I reaction center subunit VIII.